The sequence spans 378 residues: tRNA (guanine(26)-N(2))-dimethyltransferase (378 aa).

Positions 4–374 (KEVTEGKVRI…KGYEEIIRCV (371 aa)) constitute a Trm1 methyltransferase domain. S-adenosyl-L-methionine-binding residues include Arg-44, Arg-69, Asp-87, Asp-114, and Ala-115. Zn(2+) is bound by residues Cys-246, Cys-249, Cys-263, and Cys-266.

This sequence belongs to the class I-like SAM-binding methyltransferase superfamily. Trm1 family.

It carries out the reaction guanosine(26) in tRNA + 2 S-adenosyl-L-methionine = N(2)-dimethylguanosine(26) in tRNA + 2 S-adenosyl-L-homocysteine + 2 H(+). Dimethylates a single guanine residue at position 26 of a number of tRNAs using S-adenosyl-L-methionine as donor of the methyl groups. In Saccharolobus islandicus (strain L.S.2.15 / Lassen #1) (Sulfolobus islandicus), this protein is tRNA (guanine(26)-N(2))-dimethyltransferase.